Here is a 517-residue protein sequence, read N- to C-terminus: MQLNPAEISELIKSRIEGLGVSANIRNEGTVVSVTDGIVRVHGLSDAMQGEMLEFPPTADGTPSFGLALNLERDSVGAVILGEYEHISEGDTVKCTGRILEVPVGPELIGRVVNALGQPIDGKGPINAKMTDVIEKVAPGVIARKSVDQPMQTGLKSIDSMVPIGRGQRELIIGDRQTGKTAVAIDAIINQKGQNMTCVYVAIGQKASSIKNVVRALEQAGAMDYTIVVAASASESAAMQYVSAYSGCTMGEYFRDRGEDALIVYDDLSKQAVAYRQVSLLLRRPPGREAYPGDVFYLHSRLLERAARVNADYVEAFTKGEVKGKTGSLTALPIIETQAGDVSAFVPTNVISITDGQIFLETNLFNAGIRPAINAGISVSRVGSSAQTKVIKGLSGGIRTDLAQYRELAAFAQFASDLDEATRKQLDRGARVTELLKQAQYSPLPISLMGATLFAVNKGFMDDLEIKKVLPFEHGLHQFLKSSHAALLDKIEKAKALDKDAEAELTAAITSFKKSFA.

174 to 181 is a binding site for ATP; sequence GDRQTGKT.

This sequence belongs to the ATPase alpha/beta chains family. In terms of assembly, F-type ATPases have 2 components, CF(1) - the catalytic core - and CF(0) - the membrane proton channel. CF(1) has five subunits: alpha(3), beta(3), gamma(1), delta(1), epsilon(1). CF(0) has three main subunits: a(1), b(2) and c(9-12). The alpha and beta chains form an alternating ring which encloses part of the gamma chain. CF(1) is attached to CF(0) by a central stalk formed by the gamma and epsilon chains, while a peripheral stalk is formed by the delta and b chains.

The protein localises to the cell inner membrane. It catalyses the reaction ATP + H2O + 4 H(+)(in) = ADP + phosphate + 5 H(+)(out). Its function is as follows. Produces ATP from ADP in the presence of a proton gradient across the membrane. The alpha chain is a regulatory subunit. The polypeptide is ATP synthase subunit alpha (Variovorax paradoxus (strain S110)).